A 184-amino-acid chain; its full sequence is ATP synthase subunit delta (184 aa).

The protein belongs to the ATPase delta chain family. F-type ATPases have 2 components, F(1) - the catalytic core - and F(0) - the membrane proton channel. F(1) has five subunits: alpha(3), beta(3), gamma(1), delta(1), epsilon(1). F(0) has three main subunits: a(1), b(2) and c(10-14). The alpha and beta chains form an alternating ring which encloses part of the gamma chain. F(1) is attached to F(0) by a central stalk formed by the gamma and epsilon chains, while a peripheral stalk is formed by the delta and b chains.

It is found in the cell inner membrane. Functionally, f(1)F(0) ATP synthase produces ATP from ADP in the presence of a proton or sodium gradient. F-type ATPases consist of two structural domains, F(1) containing the extramembraneous catalytic core and F(0) containing the membrane proton channel, linked together by a central stalk and a peripheral stalk. During catalysis, ATP synthesis in the catalytic domain of F(1) is coupled via a rotary mechanism of the central stalk subunits to proton translocation. This protein is part of the stalk that links CF(0) to CF(1). It either transmits conformational changes from CF(0) to CF(1) or is implicated in proton conduction. This Paramagnetospirillum magneticum (strain ATCC 700264 / AMB-1) (Magnetospirillum magneticum) protein is ATP synthase subunit delta.